A 330-amino-acid chain; its full sequence is Mas-related G-protein coupled receptor member B8 (330 aa).

Over 1 to 33 the chain is Extracellular; it reads MDSSFPDWNIEFREQNESYFMESSSCDMSLAMS. N16 carries N-linked (GlcNAc...) asparagine glycosylation. A helical membrane pass occupies residues 34–54; it reads LLSIIIAIIGLTGNVIVLQLL. Residues 55-62 are Cytoplasmic-facing; sequence GFHMHRNA. Residues 63–83 form a helical membrane-spanning segment; that stretch reads FSVYIFNLSGANFLFLCTHIV. Over 84 to 101 the chain is Extracellular; it reads FSLENLIRQFHYIDIHMA. Residues 102-122 form a helical membrane-spanning segment; the sequence is LFSVNVTILAYLAGVSMITAI. Topologically, residues 123–146 are cytoplasmic; sequence SVEYWLSVLWPTWYHAQRPKHTST. A helical transmembrane segment spans residues 147-167; sequence VICTLLWVFSLLLTLWNWIIC. The Extracellular segment spans residues 168–177; the sequence is KVLDYIYNWD. The chain crosses the membrane as a helical span at residues 178–198; it reads MCWKLALIIVVWLLVLFVVLS. The Cytoplasmic segment spans residues 199–219; that stretch reads RSNQALLFRVFCGSQQTPVTR. A helical transmembrane segment spans residues 220-240; it reads LLVTIMLTALVVLICGFGIGI. Over 241 to 260 the chain is Extracellular; the sequence is CFFYWKKEENSIMPCGYFYE. Residues 261 to 281 traverse the membrane as a helical segment; it reads TILLLSGVNSCANPIICLFVG. Residues 282–330 are Cytoplasmic-facing; the sequence is SIKHCQFQCGTLRLILQRAIQESPEEEDEEVEEVVEQEGGEEDEESTTL. The interval 302–330 is disordered; that stretch reads QESPEEEDEEVEEVVEQEGGEEDEESTTL. Residues 304 to 330 are compositionally biased toward acidic residues; it reads SPEEEDEEVEEVVEQEGGEEDEESTTL.

Belongs to the G-protein coupled receptor 1 family. Mas subfamily.

Its subcellular location is the membrane. Functionally, orphan receptor. Probably involved in the function of nociceptive neurons. May regulate nociceptor function and/or development, including the sensation or modulation of pain. The protein is Mas-related G-protein coupled receptor member B8 (Mrgprb8) of Mus musculus (Mouse).